Reading from the N-terminus, the 506-residue chain is Proline--tRNA ligase (506 aa).

Belongs to the class-II aminoacyl-tRNA synthetase family. ProS type 3 subfamily. In terms of assembly, homodimer.

The protein resides in the cytoplasm. It catalyses the reaction tRNA(Pro) + L-proline + ATP = L-prolyl-tRNA(Pro) + AMP + diphosphate. Functionally, catalyzes the attachment of proline to tRNA(Pro) in a two-step reaction: proline is first activated by ATP to form Pro-AMP and then transferred to the acceptor end of tRNA(Pro). This is Proline--tRNA ligase from Akkermansia muciniphila (strain ATCC BAA-835 / DSM 22959 / JCM 33894 / BCRC 81048 / CCUG 64013 / CIP 107961 / Muc).